Reading from the N-terminus, the 245-residue chain is Venom nerve growth factor 1 (245 aa).

An N-terminal signal peptide occupies residues 1-18 (MSMLCYTLIIAFLIGIWA). A propeptide spanning residues 19 to 125 (APKSEDNVPL…ALNRNIRAKR (107 aa)) is cleaved from the precursor. Residues 47 to 66 (GLKTSRNTDQRHPAPKKAED) are compositionally biased toward basic and acidic residues. A disordered region spans residues 47-69 (GLKTSRNTDQRHPAPKKAEDQEL). 3 disulfides stabilise this stretch: cysteine 139/cysteine 206, cysteine 182/cysteine 234, and cysteine 194/cysteine 236. 2 N-linked (GlcNAc...) asparagine glycosylation sites follow: asparagine 148 and asparagine 151.

Belongs to the NGF-beta family. In terms of assembly, homodimer; non-covalently linked. Expressed by the venom gland.

It localises to the secreted. In terms of biological role, nerve growth factor is important for the development and maintenance of the sympathetic and sensory nervous systems. It stimulates division and differentiation of sympathetic and embryonic sensory neurons as well as basal forebrain cholinergic neurons in the brain. Its relevance in the snake venom is not clear. However, it has been shown to inhibit metalloproteinase-dependent proteolysis of platelet glycoprotein Ib alpha, suggesting a metalloproteinase inhibition to prevent metalloprotease autodigestion and/or protection against prey proteases. Binds a lipid between the two protein chains in the homodimer. The lipid-bound form promotes histamine relase from mouse mast cells, contrary to the lipid-free form. The sequence is that of Venom nerve growth factor 1 from Tropidechis carinatus (Australian rough-scaled snake).